The sequence spans 164 residues: Thiol peroxidase (164 aa).

The region spanning 18–163 (INEGDFAPDF…FDAALAAYKN (146 aa)) is the Thioredoxin domain. The active-site Cysteine sulfenic acid (-SOH) intermediate is C60. A disulfide bridge links C60 with C93.

It belongs to the peroxiredoxin family. Tpx subfamily. In terms of assembly, homodimer.

It catalyses the reaction a hydroperoxide + [thioredoxin]-dithiol = an alcohol + [thioredoxin]-disulfide + H2O. In terms of biological role, thiol-specific peroxidase that catalyzes the reduction of hydrogen peroxide and organic hydroperoxides to water and alcohols, respectively. Plays a role in cell protection against oxidative stress by detoxifying peroxides. This chain is Thiol peroxidase, found in Staphylococcus aureus (strain MRSA252).